The primary structure comprises 123 residues: Glycophorin-B (123 aa).

The N-terminal stretch at 1 to 19 (MYGKIIFVLLLSEIVSISA) is a signal peptide. The helical transmembrane segment at 93 to 113 (VVIILIILCVMAGVIGTILLI) threads the bilayer.

The protein belongs to the glycophorin-A family. As to quaternary structure, component of the ankyrin-1 complex in the erythrocyte, composed of ANK1, RHCE, RHAG, SLC4A1, EPB42, GYPA, GYPB and AQP1. Interacts (via the N-terminal) with RHAG; this interaction bridges the (RHAG)2(RHCE) heterotrimer with the SLC4A1 Band 3 I dimer complexed with GYPA. Post-translationally, the N-terminal extracellular domain is heavily glycosylated on serine and threonine residues.

The protein resides in the cell membrane. Its function is as follows. Component of the ankyrin-1 complex, a multiprotein complex involved in the stability and shape of the erythrocyte membrane. This Pan troglodytes (Chimpanzee) protein is Glycophorin-B.